We begin with the raw amino-acid sequence, 105 residues long: Zinc metalloproteinase/disintegrin (105 aa).

The Peptidase M12B domain maps to 1 to 3 (DEP). The Disintegrin domain occupies 11–96 (PPVCGNYFVE…AECTDRFQRN (86 aa)). 6 disulfide bridges follow: C25–C43, C27–C38, C37–C60, C51–C57, C56–C82, and C69–C89. The D/ECD-tripeptide signature appears at 75–77 (ECD). A propeptide spanning residues 99 to 105 (PCQNNNG) is cleaved from the precursor.

This sequence belongs to the venom metalloproteinase (M12B) family. P-III subfamily. In terms of assembly, monomer. Zn(2+) is required as a cofactor. As to expression, expressed by the venom gland.

Its subcellular location is the secreted. In terms of biological role, impairs hemostasis in the envenomed animal. Functionally, inhibits platelet aggregation induced by ADP, thrombin, platelet-activating factor and collagen. Acts by inhibiting fibrinogen interaction with platelet receptors GPIIb/GPIIIa (ITGA2B/ITGB3). This chain is Zinc metalloproteinase/disintegrin, found in Gloydius brevicauda (Korean slamosa snake).